A 616-amino-acid chain; its full sequence is Dihydroxy-acid dehydratase (616 aa).

Residue aspartate 81 participates in Mg(2+) binding. Cysteine 122 is a [2Fe-2S] cluster binding site. Mg(2+) is bound by residues aspartate 123 and lysine 124. Lysine 124 is subject to N6-carboxylysine. Cysteine 195 contributes to the [2Fe-2S] cluster binding site. Mg(2+) is bound at residue glutamate 491. Catalysis depends on serine 517, which acts as the Proton acceptor.

Belongs to the IlvD/Edd family. As to quaternary structure, homodimer. [2Fe-2S] cluster is required as a cofactor. Requires Mg(2+) as cofactor.

The catalysed reaction is (2R)-2,3-dihydroxy-3-methylbutanoate = 3-methyl-2-oxobutanoate + H2O. It carries out the reaction (2R,3R)-2,3-dihydroxy-3-methylpentanoate = (S)-3-methyl-2-oxopentanoate + H2O. It participates in amino-acid biosynthesis; L-isoleucine biosynthesis; L-isoleucine from 2-oxobutanoate: step 3/4. The protein operates within amino-acid biosynthesis; L-valine biosynthesis; L-valine from pyruvate: step 3/4. Functions in the biosynthesis of branched-chain amino acids. Catalyzes the dehydration of (2R,3R)-2,3-dihydroxy-3-methylpentanoate (2,3-dihydroxy-3-methylvalerate) into 2-oxo-3-methylpentanoate (2-oxo-3-methylvalerate) and of (2R)-2,3-dihydroxy-3-methylbutanoate (2,3-dihydroxyisovalerate) into 2-oxo-3-methylbutanoate (2-oxoisovalerate), the penultimate precursor to L-isoleucine and L-valine, respectively. In Photorhabdus laumondii subsp. laumondii (strain DSM 15139 / CIP 105565 / TT01) (Photorhabdus luminescens subsp. laumondii), this protein is Dihydroxy-acid dehydratase.